The following is a 214-amino-acid chain: Adenylate kinase (214 aa).

ATP is bound at residue G15–T20. The tract at residues A35 to V64 is NMP. Residues S36, R41, G62–V64, G90–R93, and Q97 each bind AMP. An LID region spans residues N127–D164. R128 lines the ATP pocket. Zn(2+) contacts are provided by C131 and C134. V137–Y138 provides a ligand contact to ATP. 2 residues coordinate Zn(2+): C151 and C154. AMP is bound by residues R161 and R172. L200 is a binding site for ATP.

The protein belongs to the adenylate kinase family. In terms of assembly, monomer.

The protein localises to the cytoplasm. It catalyses the reaction AMP + ATP = 2 ADP. The protein operates within purine metabolism; AMP biosynthesis via salvage pathway; AMP from ADP: step 1/1. Catalyzes the reversible transfer of the terminal phosphate group between ATP and AMP. Plays an important role in cellular energy homeostasis and in adenine nucleotide metabolism. The protein is Adenylate kinase of Mycoplasma genitalium (strain ATCC 33530 / DSM 19775 / NCTC 10195 / G37) (Mycoplasmoides genitalium).